The chain runs to 1413 residues: MVKLDIHTLAHHLKQERLYVNSEKQLIQRLNADVLKTAEKLYRTAWIAKQQRINLDRLIITSAEASPAECCQHAKILEDTQFVDGYKQLGFQETAYGEFLSRLRENPRLIASSLVAGEKLNQENTQSVIYTVFTSLYGNCIMQEDESYLLQVLRYLIEFELKESDNPRRLLRRGTCAFSILFKLFSEGLFSAKLFLTATLHEPIMQLLVEDEDHLETDPNKLIERFSPAQQEKLFGEKGSDRFRQKVQEMVDSNEAKLVALVNKFIGYLKQNTYCFPHSLRWIVSQMYKTLSCVDRLEVGEVRAMCTDLLLACFICPAVVNPEQYGIISDAPINEVARFNLMQVGRLLQQLAMTGSEEGDPRTKSSLGKFDKSCVAAFLDVVIGGRAVETPPMSSVNLLEGLSRTVVYITYSQLITLVNFMKSVMSGDQLREDRMALDNLLANLPQAKPGKSSSLEMTPYSTPQLSPAATPANKKNRLPIATRSRSRTNVLMDLHMDHEGSAQETIQEVQPEEVLVISLGTGPQLTPGMMSENEVLNMQLSDGGQGDVPVDENKLHGPSNRSNSVSSLDLEGESVSELGAGPSGSNGVEALQLLEHEQATTQDNLDDKLRKFEIRDMMGLTDDRDISETVSETWSTDVLGSDFDPNIDEDRLQEIAGAAAENMLGSLLCLPGSGSVLLDPCTGSTISETTSEAWSVEVLPSDSEAPDLKQEERLQELESCSGLGSTSDDTDVREVSSRPSTPGLSVVSGISATSEDIPNKIEDLRSECSSDFGGKDSVTSPDMDEVTHGAHQLTSPPSQSESLLAMFDPLSSHEGGASAVVRPKVHYARPSHPPPDPPILEGAVGGNEARLPTFGSHILTPAEMEAFKQRHSYPERLVRSRSSDVVSSVRRPMSDPSWNRRPGNEERELPPAAAIGATSLVAAPHSSSSSPSKDSSRGETEERKDSDDEKSDRNRPWWRKRFVSAMPKDDPSPRLSAQAQVAEDILDKYRNAIKRTSPSEGALANYESAEVMGDGESAHDSPRDETLQNISADDLPDSASQAAHPQDSAFSYRDAKKKLRLALCSADSVAFPVLTHSTRNGLPDHTDPEDNEIVCFLKVQIAEAINLQDKNLMAQLQETMRCVCRFDNRTCRKLLASIAEDYRKRAPYIAYLTRCRQGLQTTQAHLERLLQRVLRDKEVANRYFTTVCVRLLLESKEKKIREFIQDFQKLTAADDKTAQVEDFLQFLYGAMAQDVIWQNASEEQLQDAQLAIERSVMNRIFKLAFYPNQDGDILRDQVLHEHIQRLSKVVTANHRALQIPEVYLKEAPWPSAQSEIRTISAYKTPRDKVQCILRMCSTIMNLLSLANEDSVPGADDFVPVLVFVLIKANPPCLLSTVQYISSFYASCLSGEESYWWMQFTAAVEFIKTIDDRK.

In terms of domain architecture, Ras-GAP spans 147–385 (SYLLQVLRYL…AAFLDVVIGG (239 aa)). Ser-227 is modified (phosphoserine). Residues Thr-390 and Thr-458 each carry the phosphothreonine modification. 4 disordered regions span residues 448–474 (KPGK…PANK), 540–587 (LSDG…GSNG), 718–799 (ESCS…PPSQ), and 826–852 (HYAR…ARLP). Residues 451-467 (KSSSLEMTPYSTPQLSP) show a composition bias toward polar residues. Tyr-460 carries the phosphotyrosine modification. Ser-466 is subject to Phosphoserine. Position 470 is a phosphothreonine (Thr-470). Residues Ser-721, Ser-725, and Ser-736 each carry the phosphoserine modification. The span at 737–756 (SRPSTPGLSVVSGISATSED) shows a compositional bias: polar residues. Residue Thr-741 is modified to Phosphothreonine. Ser-745 carries the phosphoserine modification. The segment covering 757–768 (IPNKIEDLRSEC) has biased composition (basic and acidic residues). Residues Ser-856, Ser-882, Ser-883, Ser-888, Ser-894, Ser-946, Ser-972, and Ser-999 each carry the phosphoserine modification. A compositionally biased stretch (basic and acidic residues) spans 871–882 (HSYPERLVRSRS). The interval 871 to 957 (HSYPERLVRS…DEKSDRNRPW (87 aa)) is disordered. Low complexity predominate over residues 883–897 (SDVVSSVRRPMSDPS). Residues 934 to 955 (DSSRGETEERKDSDDEKSDRNR) show a composition bias toward basic and acidic residues. The disordered stretch occupies residues 1011 to 1049 (VMGDGESAHDSPRDETLQNISADDLPDSASQAAHPQDSA). Over residues 1016-1026 (ESAHDSPRDET) the composition is skewed to basic and acidic residues. Phosphoserine occurs at positions 1031 and 1038. In terms of domain architecture, VPS9 spans 1273–1413 (ILRDQVLHEH…EFIKTIDDRK (141 aa)).

The protein belongs to the GAPVD1 family. As to quaternary structure, interacts with TRIP10/CIP4. Interacts with RAB5A.

It is found in the membrane. It localises to the endosome. Acts both as a GTPase-activating protein (GAP) and a guanine nucleotide exchange factor (GEF), and participates in various processes such as endocytosis, insulin receptor internalization or LC2A4/GLUT4 trafficking. Acts as a GEF for the Ras-related protein RAB31 by exchanging bound GDP for free GTP, leading to regulate LC2A4/GLUT4 trafficking. In the absence of insulin, it maintains RAB31 in an active state and promotes a futile cycle between LC2A4/GLUT4 storage vesicles and early endosomes, retaining LC2A4/GLUT4 inside the cells. Upon insulin stimulation, it is translocated to the plasma membrane, releasing LC2A4/GLUT4 from intracellular storage vesicles. Also involved in EGFR trafficking and degradation, possibly by promoting EGFR ubiquitination and subsequent degradation by the proteasome. Has GEF activity for Rab5 and GAP activity for Ras. In Bos taurus (Bovine), this protein is GTPase-activating protein and VPS9 domain-containing protein 1 (GAPVD1).